A 506-amino-acid chain; its full sequence is Anaerobic nitric oxide reductase transcription regulator NorR (506 aa).

Position 57 is a 4-aspartylphosphate (aspartate 57). Residues 187-416 (MIGLSPNMMQ…LEHAIHRAVV (230 aa)) form the Sigma-54 factor interaction domain. ATP is bound by residues 215–222 (GETGTGKE) and 278–287 (ADNGTLFLDE). Positions 481–500 (WAACARALETDVANLHRLAK) form a DNA-binding region, H-T-H motif.

Its pathway is nitrogen metabolism; nitric oxide reduction. Its function is as follows. Required for the expression of anaerobic nitric oxide (NO) reductase, acts as a transcriptional activator for at least the norVW operon. Activation also requires sigma-54. This is Anaerobic nitric oxide reductase transcription regulator NorR from Citrobacter koseri (strain ATCC BAA-895 / CDC 4225-83 / SGSC4696).